Reading from the N-terminus, the 563-residue chain is Vacuolar protein sorting-associated protein 45 (563 aa).

This sequence belongs to the STXBP/unc-18/SEC1 family.

It is found in the golgi apparatus membrane. Its subcellular location is the endosome membrane. May play a role in vesicle-mediated protein trafficking from the Golgi stack through the trans-Golgi network. The sequence is that of Vacuolar protein sorting-associated protein 45 (vps45) from Dictyostelium discoideum (Social amoeba).